We begin with the raw amino-acid sequence, 208 residues long: UPF0323 lipoprotein HH_0014 (208 aa).

Positions 1–26 (MKHIHKIKNYAMVGGLGVMAVFALNA) are cleaved as a signal peptide. Residue C27 is the site of N-palmitoyl cysteine attachment. C27 carries S-diacylglycerol cysteine lipidation. A disordered region spans residues 148–208 (ANSQRNYKSP…TNRNTGSMGS (61 aa)). Composition is skewed to low complexity over residues 169 to 185 (SAKT…SGKS) and 193 to 208 (SSQS…SMGS).

The protein belongs to the UPF0323 family.

It is found in the cell membrane. The chain is UPF0323 lipoprotein HH_0014 from Helicobacter hepaticus (strain ATCC 51449 / 3B1).